The chain runs to 671 residues: DNA ligase (671 aa).

NAD(+)-binding positions include 31–35, 80–81, and E110; these read DAEYD and SL. Residue K112 is the N6-AMP-lysine intermediate of the active site. R133, E167, K283, and K307 together coordinate NAD(+). Residues C401, C404, C419, and C424 each contribute to the Zn(2+) site. In terms of domain architecture, BRCT spans 587–671; sequence EEELVFTGKT…YLPDEGGLNE (85 aa).

This sequence belongs to the NAD-dependent DNA ligase family. LigA subfamily. Requires Mg(2+) as cofactor. It depends on Mn(2+) as a cofactor.

The enzyme catalyses NAD(+) + (deoxyribonucleotide)n-3'-hydroxyl + 5'-phospho-(deoxyribonucleotide)m = (deoxyribonucleotide)n+m + AMP + beta-nicotinamide D-nucleotide.. Functionally, DNA ligase that catalyzes the formation of phosphodiester linkages between 5'-phosphoryl and 3'-hydroxyl groups in double-stranded DNA using NAD as a coenzyme and as the energy source for the reaction. It is essential for DNA replication and repair of damaged DNA. The sequence is that of DNA ligase from Listeria monocytogenes serotype 4b (strain F2365).